Reading from the N-terminus, the 103-residue chain is Matrix Gla protein (103 aa).

The signal sequence occupies residues 1–19 (MKSLLLLSILAALAVAALC). Glu21 is subject to 4-carboxyglutamate; partial. A phosphoserine mark is found at Ser22, Ser25, and Ser28. A Gla domain is found at 51–97 (RAKAQERIRELNKPQYELNREACDDFKLCERYAMVYGYNAAYDRYFR). Residues Glu56, Glu60, Glu67, and Glu71 each carry the 4-carboxyglutamate modification. Cysteines 73 and 79 form a disulfide. A propeptide spans 99–102 (RRGA) (removed in short form; probably by carboxypeptidase N). Position 103 (Lys103) is a propeptide, removed in long form; probably by carboxypeptidase H.

This sequence belongs to the osteocalcin/matrix Gla protein family. In terms of processing, requires vitamin K-dependent gamma-carboxylation for its function.

The protein localises to the secreted. Its function is as follows. Associates with the organic matrix of bone and cartilage. Thought to act as an inhibitor of bone formation. This chain is Matrix Gla protein (MGP), found in Bos taurus (Bovine).